The following is a 439-amino-acid chain: GTPase Der (439 aa).

2 EngA-type G domains span residues proline 2 to glycine 167 and isoleucine 182 to histidine 358. Residues glycine 8 to serine 15, aspartate 55 to isoleucine 59, asparagine 118 to glutamate 121, glycine 188 to serine 195, aspartate 235 to leucine 239, and asparagine 301 to aspartate 304 each bind GTP. Positions tyrosine 359 to histidine 439 constitute a KH-like domain.

Belongs to the TRAFAC class TrmE-Era-EngA-EngB-Septin-like GTPase superfamily. EngA (Der) GTPase family. In terms of assembly, associates with the 50S ribosomal subunit.

GTPase that plays an essential role in the late steps of ribosome biogenesis. This Thermosipho africanus (strain TCF52B) protein is GTPase Der.